Reading from the N-terminus, the 605-residue chain is Threonine--tRNA ligase (605 aa).

Residues Asp195–Pro497 form a catalytic region. 3 residues coordinate Zn(2+): Cys294, His345, and His474.

The protein belongs to the class-II aminoacyl-tRNA synthetase family. Homodimer. Zn(2+) is required as a cofactor.

The protein resides in the cytoplasm. It catalyses the reaction tRNA(Thr) + L-threonine + ATP = L-threonyl-tRNA(Thr) + AMP + diphosphate + H(+). Its function is as follows. Catalyzes the attachment of threonine to tRNA(Thr) in a two-step reaction: L-threonine is first activated by ATP to form Thr-AMP and then transferred to the acceptor end of tRNA(Thr). Also edits incorrectly charged L-seryl-tRNA(Thr). The chain is Threonine--tRNA ligase from Thermosynechococcus vestitus (strain NIES-2133 / IAM M-273 / BP-1).